An 880-amino-acid chain; its full sequence is Leucine--tRNA ligase (880 aa).

A 'HIGH' region motif is present at residues P46 to H56. A 'KMSKS' region motif is present at residues K638–S642. K641 provides a ligand contact to ATP.

The protein belongs to the class-I aminoacyl-tRNA synthetase family.

It localises to the cytoplasm. The enzyme catalyses tRNA(Leu) + L-leucine + ATP = L-leucyl-tRNA(Leu) + AMP + diphosphate. The polypeptide is Leucine--tRNA ligase (Stenotrophomonas maltophilia (strain K279a)).